A 109-amino-acid chain; its full sequence is DNILYSSEVLHENQYISYGPYEFIMQHDCNLVLYESGNPTWASNTGGLALHCRATLQTDGNLVVQNSANRIIWQSNTGTGTNGDYLLVLQKNGNVVIVGPPIWATGTGR.

In terms of domain architecture, Bulb-type lectin spans 1-109 (DNILYSSEVL…PPIWATGTGR (109 aa)). Cys29 and Cys52 are disulfide-bonded. Positions 79-82 (TGTN) are excised as a propeptide.

Homotrimer or homotetramer.

It localises to the secreted. Mannose-specific lectin. Shows agglutinating activity toward rabbit erythrocytes and mitogenic activity towards mouse lymphocytes. The sequence is that of Mannose-specific lectin from Aloe arborescens (Kidachi aloe).